Reading from the N-terminus, the 126-residue chain is Hydrogenase maturation factor HypA (126 aa).

Ni(2+) is bound at residue His2. Positions 78, 81, 97, and 100 each coordinate Zn(2+).

Belongs to the HypA/HybF family.

Involved in the maturation of [NiFe] hydrogenases. Required for nickel insertion into the metal center of the hydrogenase. The sequence is that of Hydrogenase maturation factor HypA from Methanococcus maripaludis (strain C7 / ATCC BAA-1331).